The sequence spans 315 residues: MHIKLANPRGFCAGVDRAIEIVNRALEVFGPPIYVRHEVVHNKFVVDDLRSRGAIFVEELDQVPDNVIVIFSAHGVSQAVRQEAARRGLKVFDATCPLVTKVHMEVARYSREGRECILIGHQGHPEVVGTMGQYDTANGGAIYLVEDEEDVARLQVRNPVSLAFVTQTTLSMDDAARMIDALRARFPGIGGPRRDDICYATQNRQDAVRQLAGECQLVLVVGSSSSSNSNRLRELAESIGVPAYLVDGAQDLRREWFDGIRRVGVTAGASAPEVLVRDVIDRLRQWGVVNVEELTGREENITFSIPKELRVVSSD.

Cysteine 12 is a [4Fe-4S] cluster binding site. 2 residues coordinate (2E)-4-hydroxy-3-methylbut-2-enyl diphosphate: histidine 41 and histidine 74. Dimethylallyl diphosphate-binding residues include histidine 41 and histidine 74. The isopentenyl diphosphate site is built by histidine 41 and histidine 74. Cysteine 96 contacts [4Fe-4S] cluster. Histidine 124 serves as a coordination point for (2E)-4-hydroxy-3-methylbut-2-enyl diphosphate. A dimethylallyl diphosphate-binding site is contributed by histidine 124. Histidine 124 is an isopentenyl diphosphate binding site. The Proton donor role is filled by glutamate 126. (2E)-4-hydroxy-3-methylbut-2-enyl diphosphate is bound at residue threonine 168. Residue cysteine 198 participates in [4Fe-4S] cluster binding. (2E)-4-hydroxy-3-methylbut-2-enyl diphosphate contacts are provided by serine 226, serine 227, asparagine 228, and serine 270. Dimethylallyl diphosphate contacts are provided by serine 226, serine 227, asparagine 228, and serine 270. Isopentenyl diphosphate is bound by residues serine 226, serine 227, asparagine 228, and serine 270.

The protein belongs to the IspH family. [4Fe-4S] cluster is required as a cofactor.

It catalyses the reaction isopentenyl diphosphate + 2 oxidized [2Fe-2S]-[ferredoxin] + H2O = (2E)-4-hydroxy-3-methylbut-2-enyl diphosphate + 2 reduced [2Fe-2S]-[ferredoxin] + 2 H(+). The catalysed reaction is dimethylallyl diphosphate + 2 oxidized [2Fe-2S]-[ferredoxin] + H2O = (2E)-4-hydroxy-3-methylbut-2-enyl diphosphate + 2 reduced [2Fe-2S]-[ferredoxin] + 2 H(+). Its pathway is isoprenoid biosynthesis; dimethylallyl diphosphate biosynthesis; dimethylallyl diphosphate from (2E)-4-hydroxy-3-methylbutenyl diphosphate: step 1/1. The protein operates within isoprenoid biosynthesis; isopentenyl diphosphate biosynthesis via DXP pathway; isopentenyl diphosphate from 1-deoxy-D-xylulose 5-phosphate: step 6/6. Its function is as follows. Catalyzes the conversion of 1-hydroxy-2-methyl-2-(E)-butenyl 4-diphosphate (HMBPP) into a mixture of isopentenyl diphosphate (IPP) and dimethylallyl diphosphate (DMAPP). Acts in the terminal step of the DOXP/MEP pathway for isoprenoid precursor biosynthesis. This is 4-hydroxy-3-methylbut-2-enyl diphosphate reductase from Azotobacter vinelandii (strain DJ / ATCC BAA-1303).